Here is a 123-residue protein sequence, read N- to C-terminus: NHL-repeat-containing protein 4 (123 aa).

2 NHL repeats span residues 35 to 78 and 79 to 119; these read QPLG…FPRA and GPPI…YQGL.

This chain is NHL-repeat-containing protein 4 (NHLRC4), found in Homo sapiens (Human).